Consider the following 211-residue polypeptide: Protein-L-isoaspartate O-methyltransferase (211 aa).

Ser60 is an active-site residue.

This sequence belongs to the methyltransferase superfamily. L-isoaspartyl/D-aspartyl protein methyltransferase family.

It localises to the cytoplasm. The catalysed reaction is [protein]-L-isoaspartate + S-adenosyl-L-methionine = [protein]-L-isoaspartate alpha-methyl ester + S-adenosyl-L-homocysteine. Its function is as follows. Catalyzes the methyl esterification of L-isoaspartyl residues in peptides and proteins that result from spontaneous decomposition of normal L-aspartyl and L-asparaginyl residues. It plays a role in the repair and/or degradation of damaged proteins. The sequence is that of Protein-L-isoaspartate O-methyltransferase from Pseudomonas fluorescens (strain ATCC BAA-477 / NRRL B-23932 / Pf-5).